Here is a 333-residue protein sequence, read N- to C-terminus: Ribosomal RNA small subunit methyltransferase H (333 aa).

Residues 36–38, D54, F81, D102, and Q109 contribute to the S-adenosyl-L-methionine site; that span reads GGY.

It belongs to the methyltransferase superfamily. RsmH family.

It localises to the cytoplasm. It carries out the reaction cytidine(1402) in 16S rRNA + S-adenosyl-L-methionine = N(4)-methylcytidine(1402) in 16S rRNA + S-adenosyl-L-homocysteine + H(+). In terms of biological role, specifically methylates the N4 position of cytidine in position 1402 (C1402) of 16S rRNA. This Afipia carboxidovorans (strain ATCC 49405 / DSM 1227 / KCTC 32145 / OM5) (Oligotropha carboxidovorans) protein is Ribosomal RNA small subunit methyltransferase H.